We begin with the raw amino-acid sequence, 1427 residues long: DNA-directed RNA polymerase subunit beta' (1427 aa).

Cys-70, Cys-72, Cys-85, and Cys-88 together coordinate Zn(2+). 3 residues coordinate Mg(2+): Asp-461, Asp-463, and Asp-465. The Zn(2+) site is built by Cys-810, Cys-884, Cys-891, and Cys-894. 2 disordered regions span residues 1044 to 1065 (QTDE…AGRG) and 1394 to 1427 (PEAA…GDEA).

Belongs to the RNA polymerase beta' chain family. The RNAP catalytic core consists of 2 alpha, 1 beta, 1 beta' and 1 omega subunit. When a sigma factor is associated with the core the holoenzyme is formed, which can initiate transcription. Mg(2+) serves as cofactor. The cofactor is Zn(2+).

The enzyme catalyses RNA(n) + a ribonucleoside 5'-triphosphate = RNA(n+1) + diphosphate. DNA-dependent RNA polymerase catalyzes the transcription of DNA into RNA using the four ribonucleoside triphosphates as substrates. The polypeptide is DNA-directed RNA polymerase subunit beta' (Novosphingobium aromaticivorans (strain ATCC 700278 / DSM 12444 / CCUG 56034 / CIP 105152 / NBRC 16084 / F199)).